We begin with the raw amino-acid sequence, 103 residues long: Flagellar hook-basal body complex protein FliE (103 aa).

This sequence belongs to the FliE family.

It localises to the bacterial flagellum basal body. This is Flagellar hook-basal body complex protein FliE from Yersinia pestis.